The chain runs to 272 residues: 3-methyl-2-oxobutanoate hydroxymethyltransferase (272 aa).

Residues Asp-51 and Asp-90 each coordinate Mg(2+). Residues 51–52 (DS), Asp-90, and Lys-118 contribute to the 3-methyl-2-oxobutanoate site. Glu-120 is a binding site for Mg(2+). Glu-187 functions as the Proton acceptor in the catalytic mechanism.

Belongs to the PanB family. In terms of assembly, homodecamer; pentamer of dimers. The cofactor is Mg(2+).

It localises to the cytoplasm. The enzyme catalyses 3-methyl-2-oxobutanoate + (6R)-5,10-methylene-5,6,7,8-tetrahydrofolate + H2O = 2-dehydropantoate + (6S)-5,6,7,8-tetrahydrofolate. It participates in cofactor biosynthesis; (R)-pantothenate biosynthesis; (R)-pantoate from 3-methyl-2-oxobutanoate: step 1/2. Its function is as follows. Catalyzes the reversible reaction in which hydroxymethyl group from 5,10-methylenetetrahydrofolate is transferred onto alpha-ketoisovalerate to form ketopantoate. This chain is 3-methyl-2-oxobutanoate hydroxymethyltransferase, found in Xylella fastidiosa (strain M23).